A 260-amino-acid chain; its full sequence is Shikimate dehydrogenase (NADP(+)) (260 aa).

Residues 14–16 and T60 contribute to the shikimate site; that span reads SAS. K64 (proton acceptor) is an active-site residue. Shikimate-binding residues include N85 and D100. NADP(+)-binding positions include 121–125, 145–150, and F201; these read GAGGA and NRTYER. Y203 contacts shikimate. Residue G225 participates in NADP(+) binding.

Belongs to the shikimate dehydrogenase family. In terms of assembly, homodimer.

The enzyme catalyses shikimate + NADP(+) = 3-dehydroshikimate + NADPH + H(+). The protein operates within metabolic intermediate biosynthesis; chorismate biosynthesis; chorismate from D-erythrose 4-phosphate and phosphoenolpyruvate: step 4/7. Functionally, involved in the biosynthesis of the chorismate, which leads to the biosynthesis of aromatic amino acids. Catalyzes the reversible NADPH linked reduction of 3-dehydroshikimate (DHSA) to yield shikimate (SA). This is Shikimate dehydrogenase (NADP(+)) from Pyrobaculum islandicum (strain DSM 4184 / JCM 9189 / GEO3).